The chain runs to 404 residues: Cysteine desulfurase IscS (404 aa).

Pyridoxal 5'-phosphate contacts are provided by residues 75 to 76 (AT), N155, Q183, and 203 to 205 (SGH). K206 carries the N6-(pyridoxal phosphate)lysine modification. A pyridoxal 5'-phosphate-binding site is contributed by T243. The active-site Cysteine persulfide intermediate is C328. C328 lines the [2Fe-2S] cluster pocket.

This sequence belongs to the class-V pyridoxal-phosphate-dependent aminotransferase family. NifS/IscS subfamily. As to quaternary structure, homodimer. Forms a heterotetramer with IscU, interacts with other sulfur acceptors. Pyridoxal 5'-phosphate is required as a cofactor.

Its subcellular location is the cytoplasm. It carries out the reaction (sulfur carrier)-H + L-cysteine = (sulfur carrier)-SH + L-alanine. It functions in the pathway cofactor biosynthesis; iron-sulfur cluster biosynthesis. In terms of biological role, master enzyme that delivers sulfur to a number of partners involved in Fe-S cluster assembly, tRNA modification or cofactor biosynthesis. Catalyzes the removal of elemental sulfur atoms from cysteine to produce alanine. Functions as a sulfur delivery protein for Fe-S cluster synthesis onto IscU, an Fe-S scaffold assembly protein, as well as other S acceptor proteins. The sequence is that of Cysteine desulfurase IscS from Shewanella putrefaciens (strain CN-32 / ATCC BAA-453).